Reading from the N-terminus, the 143-residue chain is Small ribosomal subunit protein bS6 (143 aa).

The interval 97 to 143 (DTEQSLIMKSKDEKGDKHERSERRRRDDEEGDVPAATDTDGDNAEAA) is disordered. Residues 105 to 124 (KSKDEKGDKHERSERRRRDD) are compositionally biased toward basic and acidic residues.

It belongs to the bacterial ribosomal protein bS6 family.

Its function is as follows. Binds together with bS18 to 16S ribosomal RNA. The protein is Small ribosomal subunit protein bS6 of Xanthomonas oryzae pv. oryzae (strain MAFF 311018).